The primary structure comprises 109 residues: Large ribosomal subunit protein uL24 (109 aa).

This sequence belongs to the universal ribosomal protein uL24 family. As to quaternary structure, part of the 50S ribosomal subunit.

In terms of biological role, one of two assembly initiator proteins, it binds directly to the 5'-end of the 23S rRNA, where it nucleates assembly of the 50S subunit. Functionally, one of the proteins that surrounds the polypeptide exit tunnel on the outside of the subunit. This is Large ribosomal subunit protein uL24 from Syntrophobacter fumaroxidans (strain DSM 10017 / MPOB).